We begin with the raw amino-acid sequence, 793 residues long: Kinesin-like protein KIF3C (793 aa).

Positions 10-365 (ALKVVARCRP…LRFANRAKNI (356 aa)) constitute a Kinesin motor domain. 97-104 (GQTGTGKT) is an ATP binding site. Disordered regions lie at residues 251–288 (ERQNKAGPNTAGGASTPSSGGSGGGGGSGGGAGGERPK), 395–423 (EKRGMLGKRPRRKSSRGKKAVSAPPGYPE), and 756–793 (KVRKSRSWCQSPQRPPPSTTHASLASASLRPATVADHE). Gly residues predominate over residues 270–284 (GGSGGGGGSGGGAGG). Residues 376–630 (KDTLLREFQE…QNEQTRELKL (255 aa)) are a coiled coil. Over residues 399 to 413 (MLGKRPRRKSSRGKK) the composition is skewed to basic residues. A globular region spans residues 631 to 793 (KYLIIENFIP…LRPATVADHE (163 aa)).

Belongs to the TRAFAC class myosin-kinesin ATPase superfamily. Kinesin family. Kinesin II subfamily. As to quaternary structure, heterodimer of KIF3A and KIF3C.

The protein localises to the cytoplasm. It is found in the cytoskeleton. Functionally, microtubule-based anterograde translocator for membranous organelles. The chain is Kinesin-like protein KIF3C (KIF3C) from Pongo abelii (Sumatran orangutan).